The primary structure comprises 204 residues: Leucyl/phenylalanyl-tRNA--protein transferase (204 aa).

Belongs to the L/F-transferase family.

It is found in the cytoplasm. It carries out the reaction N-terminal L-lysyl-[protein] + L-leucyl-tRNA(Leu) = N-terminal L-leucyl-L-lysyl-[protein] + tRNA(Leu) + H(+). The enzyme catalyses N-terminal L-arginyl-[protein] + L-leucyl-tRNA(Leu) = N-terminal L-leucyl-L-arginyl-[protein] + tRNA(Leu) + H(+). It catalyses the reaction L-phenylalanyl-tRNA(Phe) + an N-terminal L-alpha-aminoacyl-[protein] = an N-terminal L-phenylalanyl-L-alpha-aminoacyl-[protein] + tRNA(Phe). In terms of biological role, functions in the N-end rule pathway of protein degradation where it conjugates Leu, Phe and, less efficiently, Met from aminoacyl-tRNAs to the N-termini of proteins containing an N-terminal arginine or lysine. The polypeptide is Leucyl/phenylalanyl-tRNA--protein transferase (Rhizobium etli (strain ATCC 51251 / DSM 11541 / JCM 21823 / NBRC 15573 / CFN 42)).